The chain runs to 130 residues: Small ribosomal subunit protein uS9 (130 aa).

Belongs to the universal ribosomal protein uS9 family.

The sequence is that of Small ribosomal subunit protein uS9 from Blochmanniella floridana.